A 159-amino-acid polypeptide reads, in one-letter code: RNA pyrophosphohydrolase (159 aa).

In terms of domain architecture, Nudix hydrolase spans 6–149 (GFRPNVGIIL…KREVYRRALK (144 aa)). The short motif at 38–59 (GGINDRETPEEALYRELNEEVG) is the Nudix box element.

The protein belongs to the Nudix hydrolase family. RppH subfamily. Requires a divalent metal cation as cofactor.

In terms of biological role, accelerates the degradation of transcripts by removing pyrophosphate from the 5'-end of triphosphorylated RNA, leading to a more labile monophosphorylated state that can stimulate subsequent ribonuclease cleavage. The sequence is that of RNA pyrophosphohydrolase from Pseudomonas aeruginosa (strain LESB58).